The sequence spans 311 residues: Olfactory receptor 1073 (311 aa).

At 1–25 (MKQQNDTQILQFLLLGLSENTELQP) the chain is on the extracellular side. N-linked (GlcNAc...) asparagine glycosylation is present at N5. The helical transmembrane segment at 26 to 46 (LIYWLFFSMYLVTVWGNLIII) threads the bilayer. The Cytoplasmic portion of the chain corresponds to 47 to 57 (LATVLDFRLHT). The chain crosses the membrane as a helical span at residues 58–78 (AMYFFLCNLSFVDICLISTTI). At 79–97 (PKMLANVHLNHKAITYEGC) the chain is on the extracellular side. C97 and C179 form a disulfide bridge. The chain crosses the membrane as a helical span at residues 98–118 (IMQIYFFTLFVGLDNFLLAVM). Residues 119–133 (AYDRFVAICHPLRYT) lie on the Cytoplasmic side of the membrane. A helical transmembrane segment spans residues 134–154 (SIMTPHLCMSLVLVSWIASVL). N155 is a glycosylation site (N-linked (GlcNAc...) asparagine). At 155 to 196 (NSSLQSFLVLQLSFCTEVEIPHFFCELSMLVHLACSDTFLSD) the chain is on the extracellular side. A helical transmembrane segment spans residues 197–217 (MAMNVLAALLGGGCLVGILYS). Over 218–244 (YSKIVSSIQAISSAEGKYKAFSTCVSH) the chain is Cytoplasmic. The helical transmembrane segment at 245-265 (LSVVSLFYCTLLGVYLSSAVT) threads the bilayer. Over 266-271 (QNSHST) the chain is Extracellular. A helical transmembrane segment spans residues 272-292 (AATSLMYTVVTPMLNPFIYSL). The Cytoplasmic segment spans residues 293–311 (RNDNIKRALKNFVKKKLEK).

This sequence belongs to the G-protein coupled receptor 1 family. Tongue specific.

It is found in the cell membrane. In terms of biological role, possible taste receptor. This chain is Olfactory receptor 1073 (Olr1073), found in Rattus norvegicus (Rat).